We begin with the raw amino-acid sequence, 587 residues long: Hatching enzyme (587 aa).

The first 18 residues, 1-18, serve as a signal peptide directing secretion; that stretch reads MANSGLILLVMFMIHVTT. Residues 19–166 constitute a propeptide, activation peptide; the sequence is VHNVPLPSTA…PRCGVPDVLP (148 aa). Residues Asn64, Asn126, and Asn141 are each glycosylated (N-linked (GlcNAc...) asparagine). The short motif at 157 to 164 is the Cysteine switch element; the sequence is PRCGVPDV. The Zn(2+) site is built by Cys159 and His283. Glu284 is an active-site residue. Zn(2+) contacts are provided by His287 and His293. The disordered stretch occupies residues 325 to 382; it reads LYGSNSGSGTTTTTRRPTTTRATTTRRTTTTRATTTRATTTTTTSPSRPSPPRRACSG. Low complexity predominate over residues 334–371; it reads TTTTTRRPTTTRATTTRRTTTTRATTTRATTTTTTSPS. An intrachain disulfide couples Cys380 to Cys582. Hemopexin repeat units follow at residues 381 to 422, 425 to 468, 469 to 513, and 518 to 570; these read SGSF…RFGF, PQNI…WVGL, PCNI…FNDV, and HDGV…IPQC. N-linked (GlcNAc...) asparagine glycosylation occurs at Asn584.

Belongs to the peptidase M10A family. The cofactor is Zn(2+).

It carries out the reaction Hydrolysis of proteins of the fertilization envelope and dimethylcasein.. Functionally, allows the sea urchin to digest the protective envelope derived from the egg extracellular matrix; thus allowing the sea urchin to swim freely. The polypeptide is Hatching enzyme (Paracentrotus lividus (Common sea urchin)).